We begin with the raw amino-acid sequence, 678 residues long: ABC transporter F family member 2 (678 aa).

ABC transporter domains are found at residues 84–342 and 411–626; these read VRLE…EAQY and VTVK…AREL. ATP contacts are provided by residues 116–123 and 443–450; these read GVNGAGKT and GPNGCGKS. Residues 630–678 are disordered; the sequence is AELEEKAPKVKAKSKMSKAEREARKKQKMKAFQASKKKSKSSKNAKRWN. Over residues 653–678 the composition is skewed to basic residues; it reads RKKQKMKAFQASKKKSKSSKNAKRWN.

It belongs to the ABC transporter superfamily. ABCF family. EF3 (TC 3.A.1.121) subfamily.

The polypeptide is ABC transporter F family member 2 (ABCF2) (Arabidopsis thaliana (Mouse-ear cress)).